A 974-amino-acid polypeptide reads, in one-letter code: Collagen alpha-1(I) chain (974 aa).

Low complexity predominate over residues 1 to 14; it reads GISVPGPMGPSGPR. Positions 1–974 are disordered; sequence GISVPGPMGP…PGPPGPPGPP (974 aa). 4-hydroxyproline is present on residues P17, P20, P23, P32, P35, P38, P53, P68, P75, and P81. The segment covering 25-44 has biased composition (low complexity); that stretch reads PQGFQGPPGEPGEPGASGPM. The segment covering 56–73 has biased composition (basic and acidic residues); sequence NGDDGEAGKPGRPGERRG. 5-hydroxylysine; alternate is present on K84. A glycan (O-linked (Gal...) hydroxylysine; alternate) is linked at K84. At S90 the chain carries Phosphoserine. The segment covering 98-114 has biased composition (low complexity); it reads DAGPAGPKGEPGSPGEN. 16 positions are modified to 4-hydroxyproline: P108, P111, P117, P126, P132, P153, P162, P165, P192, P195, P207, P213, P222, P228, P231, and P245. Residues 132–150 show a composition bias toward low complexity; it reads PGASGPAGARGNDGATGAA. Residues 152-164 show a composition bias toward pro residues; that stretch reads PPGPTGPAGPPGF. Over residues 198–228 the composition is skewed to low complexity; the sequence is AGAAGPAGNPGADGQPGAKGANGAPGIAGAP. 5-hydroxylysine is present on K248. Residues P254, P257, P269, P278, P293, P299, P308, and P314 each carry the 4-hydroxyproline modification. Over residues 303–312 the composition is skewed to gly residues; sequence GERGGPGSRG. The residue at position 323 (K323) is a 5-hydroxylysine. A 4-hydroxyproline mark is found at P328, P337, P343, P349, P358, P361, P370, P379, P385, P397, P406, P415, P418, P436, P454, P460, P466, P472, P484, P493, P505, P520, P527, and P536. Positions 352-378 are enriched in low complexity; that stretch reads KGLTGSPGSPGPDGKTGPPGPAGQDGR. Low complexity predominate over residues 387 to 406; sequence ARGQAGVMGFPGPKGAAGEP. Residues 504–517 are compositionally biased toward low complexity; it reads APGNDGAKGDAGAP. A 5-hydroxylysine modification is found at K548. 3 positions are modified to 4-hydroxyproline: P554, P569, and P575. A compositionally biased stretch (low complexity) spans 581–595; the sequence is SGPSGPAGPTGARGA. S584 bears the Phosphoserine mark. 4-hydroxyproline is present on residues P596, P602, P605, P614, P620, P638, P647, and P656. The segment covering 608-635 has biased composition (low complexity); it reads AGFAGPPGADGQPGAKGEPGDAGAKGDA. The segment covering 637–649 has biased composition (pro residues); that stretch reads PPGPAGPTGPPGP. A 5-hydroxylysine modification is found at K659. A compositionally biased stretch (low complexity) spans 664–680; the sequence is SAGPPGATGFPGAAGRV. 4-hydroxyproline occurs at positions 668 and 674. P682 carries the 3-hydroxyproline modification. 4-hydroxyproline occurs at positions 683, 692, 695, 716, 725, 733, 742, 760, 769, 772, 778, 793, 799, 805, 814, and 820. Positions 709–718 are enriched in low complexity; sequence ETGPAGRPGE. Residues 730–742 show a composition bias toward low complexity; it reads KGSPGADGPAGAP. A compositionally biased stretch (pro residues) spans 792–802; that stretch reads PPGPVGPPGLA. Over residues 804 to 826 the composition is skewed to low complexity; it reads PPGESGREGSPGAEGSPGRDGSP. A compositionally biased stretch (pro residues) spans 828 to 844; that stretch reads PKGPPGAPGAPGAPGPV. K829 is modified (5-hydroxylysine). 4-hydroxyproline is present on residues P832, P835, and P838. Low complexity predominate over residues 865–879; that stretch reads AGPAGARGPAGPQGP. Over residues 880-894 the composition is skewed to basic and acidic residues; it reads RGDKGETGEQGDRRG. At K883 the chain carries 5-hydroxylysine. Residues P905, P908, P926, and P941 each carry the 4-hydroxyproline modification. The span at 908–941 shows a compositional bias: low complexity; it reads PGEQGPSGASGPAGPRGPPGSAGSPGKDGLNGLP. P946 bears the 3-hydroxyproline mark. Residue P947 is modified to 4-hydroxyproline. A compositionally biased stretch (pro residues) spans 959–974; that stretch reads VGPPGPPGPPGPPGPP. P961 bears the 3-hydroxyproline mark. P962 is subject to 4-hydroxyproline. At P964 the chain carries 3-hydroxyproline. P965 is subject to 4-hydroxyproline. The residue at position 967 (P967) is a 3-hydroxyproline. P968, P971, and P974 each carry 4-hydroxyproline.

This sequence belongs to the fibrillar collagen family. In terms of assembly, trimers of one alpha 2(I) and two alpha 1(I) chains. In terms of processing, contains mostly 4-hydroxyproline. Proline residues at the third position of the tripeptide repeating unit (G-X-Y) are hydroxylated in some or all of the chains. Contains 3-hydroxyproline at a few sites. This modification occurs on the first proline residue in the sequence motif Gly-Pro-Hyp, where Hyp is 4-hydroxyproline. Post-translationally, lysine residues at the third position of the tripeptide repeating unit (G-X-Y) are 5-hydroxylated in some or all of the chains. In terms of processing, O-glycosylated on hydroxylated lysine residues. The O-linked glycan consists of a Glc-Gal disaccharide. As to expression, expressed in bones.

Its subcellular location is the secreted. It localises to the extracellular space. The protein resides in the extracellular matrix. Its function is as follows. Type I collagen is a member of group I collagen (fibrillar forming collagen). The protein is Collagen alpha-1(I) chain of Scelidodon sp. (strain SLP-2019) (South American ground sloth).